A 1153-amino-acid chain; its full sequence is ATP-dependent helicase/deoxyribonuclease subunit B (1153 aa).

In terms of domain architecture, UvrD-like helicase ATP-binding spans 1–289 (MELNAYIGRA…KHLEQNFNAL (289 aa)). 8–15 (GRAGTGKS) lines the ATP pocket. The 315-residue stretch at 269 to 583 (LDVQRFIHND…SIGTMDLAKV (315 aa)) folds into the UvrD-like helicase C-terminal domain. 4 residues coordinate [4Fe-4S] cluster: Cys784, Cys1110, Cys1113, and Cys1119.

The protein belongs to the helicase family. AddB/RexB type 1 subfamily. In terms of assembly, heterodimer of AddA and AddB. Mg(2+) serves as cofactor. It depends on [4Fe-4S] cluster as a cofactor.

The heterodimer acts as both an ATP-dependent DNA helicase and an ATP-dependent, dual-direction single-stranded exonuclease. Recognizes the chi site generating a DNA molecule suitable for the initiation of homologous recombination. The AddB subunit has 5' -&gt; 3' nuclease activity but not helicase activity. The chain is ATP-dependent helicase/deoxyribonuclease subunit B from Staphylococcus saprophyticus subsp. saprophyticus (strain ATCC 15305 / DSM 20229 / NCIMB 8711 / NCTC 7292 / S-41).